The primary structure comprises 50 residues: Large ribosomal subunit protein eL39 (50 aa).

The protein belongs to the eukaryotic ribosomal protein eL39 family.

The sequence is that of Large ribosomal subunit protein eL39 from Methanosphaerula palustris (strain ATCC BAA-1556 / DSM 19958 / E1-9c).